The sequence spans 386 residues: GTPase Obg (386 aa).

The Obg domain maps to 1–159; it reads MKFIDEARIE…RTLKLELKVL (159 aa). The OBG-type G domain maps to 160–348; the sequence is ADVGLLGMPN…LTFAIMSYLD (189 aa). Residues 166 to 173, 191 to 195, 213 to 216, 284 to 287, and 329 to 331 contribute to the GTP site; these read GMPNAGKS, FTTLH, DIPG, NKVD, and SAL. Positions 173 and 193 each coordinate Mg(2+).

It belongs to the TRAFAC class OBG-HflX-like GTPase superfamily. OBG GTPase family. Monomer. Mg(2+) is required as a cofactor.

It is found in the cytoplasm. Its function is as follows. An essential GTPase which binds GTP, GDP and possibly (p)ppGpp with moderate affinity, with high nucleotide exchange rates and a fairly low GTP hydrolysis rate. Plays a role in control of the cell cycle, stress response, ribosome biogenesis and in those bacteria that undergo differentiation, in morphogenesis control. This is GTPase Obg from Chromobacterium violaceum (strain ATCC 12472 / DSM 30191 / JCM 1249 / CCUG 213 / NBRC 12614 / NCIMB 9131 / NCTC 9757 / MK).